Here is a 115-residue protein sequence, read N- to C-terminus: Putative membrane protein insertion efficiency factor (115 aa).

It belongs to the UPF0161 family.

Its subcellular location is the cell membrane. Functionally, could be involved in insertion of integral membrane proteins into the membrane. In Mycobacterium avium (strain 104), this protein is Putative membrane protein insertion efficiency factor.